Consider the following 623-residue polypeptide: Prothrombin (623 aa).

The first 24 residues, 1 to 24 (MAHVGGLWLHGCLALAVLVSLVHS), serve as a signal peptide directing secretion. Positions 25–43 (QHVFMAPQQALSLLQRARR) are excised as a propeptide. A Gla domain is found at 44–90 (ANSGFFEEMRKGNLERECVEEQCSREEAYEALESPSETDAFWAKYTA). Glutamate 50, glutamate 51, glutamate 58, glutamate 60, glutamate 63, glutamate 64, glutamate 69, glutamate 70, glutamate 73, and glutamate 76 each carry 4-carboxyglutamate. A disulfide bridge connects residues cysteine 61 and cysteine 66. 11 disulfide bridges follow: cysteine 91–cysteine 104, cysteine 109–cysteine 187, cysteine 130–cysteine 170, cysteine 158–cysteine 182, cysteine 214–cysteine 292, cysteine 235–cysteine 275, cysteine 263–cysteine 287, cysteine 337–cysteine 483, cysteine 392–cysteine 408, cysteine 537–cysteine 551, and cysteine 565–cysteine 595. Kringle domains are found at residues 108–187 (NCAE…IPVC) and 213–292 (TCVP…LDYC). 2 N-linked (GlcNAc...) asparagine glycosylation sites follow: asparagine 120 and asparagine 144. The Peptidase S1 domain occupies 365-619 (IVEGSDAEIG…LKKWMQKVID (255 aa)). The Charge relay system role is filled by histidine 407. A glycan (N-linked (GlcNAc...) asparagine) is linked at asparagine 417. Aspartate 463 serves as the catalytic Charge relay system. A high affinity receptor-binding region which is also known as the TP508 peptide region spans residues 552 to 574 (AGYKPDEGKRGDACEGDSGGPFV). Residue serine 569 is the Charge relay system of the active site.

The protein belongs to the peptidase S1 family. As to quaternary structure, heterodimer (named alpha-thrombin) of a light and a heavy chain; disulfide-linked. Forms a heterodimer with SERPINA5. In plasma, interacts (via N-terminus) with alpha-1-microglobulin; this interaction does not prevent the activation of prothrombin to thrombin. Post-translationally, the gamma-carboxyglutamyl residues, which bind calcium ions, result from the carboxylation of glutamyl residues by a microsomal enzyme, the vitamin K-dependent carboxylase. The modified residues are necessary for the calcium-dependent interaction with a negatively charged phospholipid surface, which is essential for the conversion of prothrombin to thrombin. In the penultimate step of the coagulation cascade, prothrombin is converted to thrombin by the prothrombinase complex composed of factor Xa (F10), cofactor Va (F5), and phospholipids. This activation requires factor Xa-catalyzed sequential cleavage at 2 sites, Arg-315 and Arg-364, along 2 possible pathways. In the first pathway, the first cleavage occurs at Arg-315, leading to the formation of the inactive intermediate prethrombin-2. This pathway preferentially occurs on platelets and in the absence of cofactor Va. In the second pathway, the first cleavage occurs at Arg-364, which separates protease domain into 2 chains that remain connected through a disulfide bond and generates the active intermediate meizothrombin. The presence of cofactor Va directs activation along the meizothrombin pathway and greatly accelerates the rate of cleavage at Arg-364, but has a smaller effect on the cleavage of meizothrombin at Arg-315. Meizothrombin accumulates as an intermediate when prothrombinase is assembled on the membrane of red blood cells.

The catalysed reaction is Selective cleavage of Arg-|-Gly bonds in fibrinogen to form fibrin and release fibrinopeptides A and B.. Its activity is regulated as follows. Activity is promoted in the presence of negatively charged surfaces, such as polyphosphate and dextran sulfate. Inhibited by SERPINA5. In terms of biological role, thrombin, which cleaves bonds after Arg and Lys, converts fibrinogen to fibrin and activates factors V, VII, VIII, XIII, and, in complex with thrombomodulin, protein C. Functions in blood homeostasis, inflammation and wound healing. Activates coagulation factor XI (F11); activation is promoted by the contact with negatively charged surfaces. Triggers the production of pro-inflammatory cytokines, such as MCP-1/CCL2 and IL8/CXCL8, in endothelial cells. The sequence is that of Prothrombin (F2) from Sus scrofa (Pig).